The chain runs to 338 residues: Protein FosB (338 aa).

Disordered regions lie at residues 1-54 (MFQA…PGSF) and 80-179 (AQSQ…RREL). Composition is skewed to polar residues over residues 13–31 (SRCS…SVDS) and 102–112 (TSYSTPGLSAY). Serine 27 is modified (phosphoserine). Low complexity predominate over residues 123–137 (PSTSTTTSGPVSARP). A bZIP domain is found at 155–218 (EEKRRVRRER…ERLEFVLVAH (64 aa)). A basic motif region spans residues 157-182 (KRRVRRERNKLAAAKCRNRRRELTDR). The segment at 183–211 (LQAETDQLEEEKAELESEIAELQKEKERL) is leucine-zipper. Disordered regions lie at residues 222-276 (CKIP…PPNL) and 316-338 (GAQR…LLAL). The segment covering 256–265 (LPPPPPPPLP) has biased composition (pro residues). 2 stretches are compositionally biased toward polar residues: residues 266–276 (FQSSRDAPPNL) and 318–338 (QRTS…LLAL).

It belongs to the bZIP family. Fos subfamily. Heterodimer; binds to DNA as heterodimer. Component of an AP-1 transcription factor complex; composed of FOS-JUN heterodimers. As part of the AP-1 transcription factor complex, forms heterodimers with JUN, JUNB or JUND, thereby binding to the AP-1 consensus sequence and stimulating transcription. Interacts with the BAF multiprotein chromatin-remodeling complex subunits SMARCB1 and SMARCD1. Interacts with ARID1A and JUN. As to quaternary structure, homodimer under oxidizing conditions and monomer under reducing conditions (in vitro). Heterodimer; binds to DNA as heterodimer. Forms heterodimers with JUNB, JUN or JUND; thereby binding to the AP-1 consensus sequence but does not stimulate transcription. Forms heterodimers with JUND under oxidizing conditions. In terms of processing, phosphorylated. Post-translationally, phosphorylated at Ser-27 by CSNK2A1; phosphorylation increases protein stability and transactivation potential. Expressed in brain, including the preoptic area of the hypothalamus, the main and accessory olfactory bulbs, the pyriform cortex and the hippocampus (at protein level). Expressed in the neurons of the subgranular zone of the dentate gyrus in the hippocampus (at protein level). Expressed in pyramidal cells in CA1 and CA3, in the dentate gyrus and the nucleus accumbens of the striatum (at protein level). In terms of tissue distribution, expressed in the core and shell of the nucleus accumbens of the striatum (at protein level). Expressed in the neurons of the subgranular zone of the dentate gyrus in the hippocampus (at protein level).

The protein localises to the nucleus. Functionally, heterodimerizes with proteins of the JUN family to form an AP-1 transcription factor complex, thereby enhancing their DNA binding activity to gene promoters containing an AP-1 consensus sequence 5'-TGA[GC]TCA-3' and enhancing their transcriptional activity. As part of the AP-1 complex, facilitates enhancer selection together with cell-type-specific transcription factors by collaboratively binding to nucleosomal enhancers and recruiting the SWI/SNF (BAF) chromatin remodeling complex to establish accessible chromatin. Together with JUN, plays a role in activation-induced cell death of T cells by binding to the AP-1 promoter site of FASLG/CD95L, and inducing its transcription in response to activation of the TCR/CD3 signaling pathway. Exhibits transactivation activity in vitro. Involved in the display of nurturing behavior towards newborns. May play a role in neurogenesis in the hippocampus and in learning and memory-related tasks by regulating the expression of various genes involved in neurogenesis, depression and epilepsy. Implicated in behavioral responses related to morphine reward and spatial memory. In terms of biological role, exhibits lower transactivation activity than isoform 1 in vitro. The heterodimer with JUN does not display any transcriptional activity, and may thereby act as an transcriptional inhibitor. May be involved in the regulation of neurogenesis in the hippocampus. May play a role in synaptic modifications in nucleus accumbens medium spiny neurons and thereby play a role in adaptive and pathological reward-dependent learning, including maladaptive responses involved in drug addiction. Seems to be more stably expressed with a half-life of ~9.5 hours in cell culture as compared to 1.5 hours half-life of isoform 1. The chain is Protein FosB from Mus musculus (Mouse).